A 120-amino-acid polypeptide reads, in one-letter code: Large ribosomal subunit protein uL18 (120 aa).

Belongs to the universal ribosomal protein uL18 family. Part of the 50S ribosomal subunit; part of the 5S rRNA/L5/L18/L25 subcomplex. Contacts the 5S and 23S rRNAs.

This is one of the proteins that bind and probably mediate the attachment of the 5S RNA into the large ribosomal subunit, where it forms part of the central protuberance. The chain is Large ribosomal subunit protein uL18 from Brevibacillus brevis (strain 47 / JCM 6285 / NBRC 100599).